Here is a 23-residue protein sequence, read N- to C-terminus: Malate dehydrogenase (23 aa).

It belongs to the LDH/MDH superfamily. MDH type 2 family.

The catalysed reaction is (S)-malate + NAD(+) = oxaloacetate + NADH + H(+). Functionally, catalyzes the reversible oxidation of malate to oxaloacetate. The polypeptide is Malate dehydrogenase (mdh) (Thermoleophilum album).